We begin with the raw amino-acid sequence, 164 residues long: Large ribosomal subunit protein uL10 (164 aa).

Belongs to the universal ribosomal protein uL10 family. As to quaternary structure, part of the ribosomal stalk of the 50S ribosomal subunit. The N-terminus interacts with L11 and the large rRNA to form the base of the stalk. The C-terminus forms an elongated spine to which L12 dimers bind in a sequential fashion forming a multimeric L10(L12)X complex.

Functionally, forms part of the ribosomal stalk, playing a central role in the interaction of the ribosome with GTP-bound translation factors. The protein is Large ribosomal subunit protein uL10 of Helicobacter pylori (strain P12).